A 237-amino-acid polypeptide reads, in one-letter code: Phosphatidylserine decarboxylase proenzyme (237 aa).

Serine 206 acts as the Schiff-base intermediate with substrate; via pyruvic acid in catalysis. A Pyruvic acid (Ser); by autocatalysis modification is found at serine 206.

It belongs to the phosphatidylserine decarboxylase family. PSD-A subfamily. In terms of assembly, heterodimer of a large membrane-associated beta subunit and a small pyruvoyl-containing alpha subunit. Requires pyruvate as cofactor. In terms of processing, is synthesized initially as an inactive proenzyme. Formation of the active enzyme involves a self-maturation process in which the active site pyruvoyl group is generated from an internal serine residue via an autocatalytic post-translational modification. Two non-identical subunits are generated from the proenzyme in this reaction, and the pyruvate is formed at the N-terminus of the alpha chain, which is derived from the carboxyl end of the proenzyme. The post-translation cleavage follows an unusual pathway, termed non-hydrolytic serinolysis, in which the side chain hydroxyl group of the serine supplies its oxygen atom to form the C-terminus of the beta chain, while the remainder of the serine residue undergoes an oxidative deamination to produce ammonia and the pyruvoyl prosthetic group on the alpha chain.

It localises to the cell membrane. The catalysed reaction is a 1,2-diacyl-sn-glycero-3-phospho-L-serine + H(+) = a 1,2-diacyl-sn-glycero-3-phosphoethanolamine + CO2. Its pathway is phospholipid metabolism; phosphatidylethanolamine biosynthesis; phosphatidylethanolamine from CDP-diacylglycerol: step 2/2. Functionally, catalyzes the formation of phosphatidylethanolamine (PtdEtn) from phosphatidylserine (PtdSer). The chain is Phosphatidylserine decarboxylase proenzyme from Rhodococcus opacus (strain B4).